Reading from the N-terminus, the 477-residue chain is MKILFVAAEGAPFSKTGGLGDVIGALPKSLVKAGHEVAVILPYYDMVEAKFGNQIEDVLHFEVSVGWRRQYCGIKKTVLNGVTFYFIDNQYYFFRGHVYGDFDDGERFAFFQLAAIEAMERIAFIPDLLHVHDYHTAMIPFLLKEKYRWIQAYEDIETVLTIHNLEFQGQFSEGMLGDLFGVGFERYADGTLRWNNCLNWMKAGILYANRVSTVSPSYAHEIMTSQFGCNLDQILKMESGKVSGIVNGIDADLYNPQTDALLDYHFNQEDLSGKAKNKAKLQERVGLPVRADVPLVGIVSRLTRQKGFDVVVESLHHILQEDVQIVLLGTGDPAFEGAFSWFAQIYPDKLSANITFDVKLAQEIYAACDLFLMPSRFEPCGLSQMMAMRYGTLPLVHEVGGLRDTVCAFNPIEGSGTGFSFDNLSPYWLNWTFQTALDLYRNHPDIWRNLQKQAMESDFSWDTACKSYLDLYHSLVN.

ADP-alpha-D-glucose is bound at residue Lys15.

This sequence belongs to the glycosyltransferase 1 family. Bacterial/plant glycogen synthase subfamily.

The catalysed reaction is [(1-&gt;4)-alpha-D-glucosyl](n) + ADP-alpha-D-glucose = [(1-&gt;4)-alpha-D-glucosyl](n+1) + ADP + H(+). It participates in glycan biosynthesis; glycogen biosynthesis. Its function is as follows. Synthesizes alpha-1,4-glucan chains using ADP-glucose. The chain is Glycogen synthase from Streptococcus pneumoniae (strain Hungary19A-6).